A 2871-amino-acid chain; its full sequence is Fibrillin-1 (2871 aa).

A signal peptide spans 1-24; the sequence is MRRGGLLEVALGFTVLLASYTSHG. Residues 25-44 constitute a propeptide that is removed on maturation; that stretch reads ADTNLEAGNVKETRANRAKR. The tract at residues 45-81 is fibrillin unique N-terminal (FUN) domain; it reads RGGGGHDALKGPNVCGSRYNAYCCPGWKTLPGGNQCI. Residues 45–450 form an N-terminal domain region; the sequence is RGGGGHDALK…PPRVLPVNVT (406 aa). Disulfide bonds link Cys-59-Cys-68, Cys-67-Cys-80, Cys-85-Cys-94, Cys-89-Cys-100, Cys-102-Cys-111, Cys-119-Cys-129, Cys-123-Cys-134, Cys-136-Cys-145, Cys-150-Cys-160, Cys-154-Cys-166, and Cys-168-Cys-177. EGF-like domains follow at residues 81–112, 115–146, and 147–178; these read IVPI…PSCG, SIQH…THCG, and QPVC…PQCE. The interval 119–329 is interaction with MFAP4; that stretch reads CNIRCMNGGS…YTSPDGTRCI (211 aa). The TB 1 domain maps to 184–236; that stretch reads GPCFTVISNQMCQGQLSGIVCTKTLCCATVGRAWGHPCEMCPAQPHPCRRGFI. Positions 195–221 are hybrid domain 1; it reads CQGQLSGIVCTKTLCCATVGRAWGHPC. Positions 246-287 constitute an EGF-like 4; calcium-binding domain; that stretch reads DVDECQAIPGLCQGGNCINTVGSFECKCPAGHKFNEVSQKCE. 6 disulfide bridges follow: Cys-250-Cys-262, Cys-257-Cys-271, Cys-273-Cys-286, Cys-292-Cys-304, Cys-299-Cys-313, and Cys-315-Cys-328. An O-linked (Glc) serine glycan is attached at Ser-268. In terms of domain architecture, EGF-like 5; calcium-binding spans 288–329; sequence DIDECSTIPGICDGGECTNTVSSYFCKCPPGFYTSPDGTRCI. The 56-residue stretch at 334–389 folds into the TB 2 domain; the sequence is GYCYTALANGRCSNQLPQSITKMQCCCDVGRCWSPGVTVAPEMCPIRATEDFNKLC. The N-linked (GlcNAc...) asparagine glycan is linked to Asn-448. The region spanning 449–489 is the EGF-like 6 domain; the sequence is VTDYCQLFRYLCQNGRCIPTPGSYRCECNKGFQLDLRGECI. 15 disulfides stabilise this stretch: Cys-453–Cys-465, Cys-460–Cys-474, Cys-476–Cys-488, Cys-494–Cys-504, Cys-499–Cys-513, Cys-515–Cys-528, Cys-534–Cys-546, Cys-541–Cys-555, Cys-557–Cys-570, Cys-576–Cys-587, Cys-582–Cys-596, Cys-598–Cys-611, Cys-617–Cys-628, Cys-623–Cys-637, and Cys-639–Cys-652. Ser-471 is a glycosylation site (O-linked (Glc) serine). In terms of domain architecture, EGF-like 7; calcium-binding spans 490–529; that stretch reads DVDECEKNPCAGGECINTQGSYTCQCRPGYQSTLTRTECR. Ser-510 carries O-linked (Glc) serine glycosylation. The 42-residue stretch at 530–571 folds into the EGF-like 8; calcium-binding domain; sequence DIDECLQNGRICNNGRCINTDGSFHCVCNAGFHVTRDGKNCE. An EGF-like 9; calcium-binding domain is found at 572–612; the sequence is DMDECSIRNMCLNGMCINEDGSFKCICKPGFQLASDGRYCK. The region spanning 613–653 is the EGF-like 10; calcium-binding domain; sequence DINECETPGICMNGRCVNTDGSYRCECFPGLAVGLDGRVCV. Residues 659-711 enclose the TB 3 domain; the sequence is STCYGGYKRGQCVKPLFGAVTKSECCCASTEYAFGEPCQPCPSQNSAEYQALC. In terms of domain architecture, EGF-like 11; calcium-binding spans 723 to 764; it reads DINECALDPDICPNGICENLRGTYKCICNSGYEVDSTGKNCV. Intrachain disulfides connect Cys-727–Cys-739, Cys-734–Cys-748, Cys-750–Cys-763, Cys-769–Cys-781, Cys-776–Cys-790, Cys-792–Cys-805, Cys-811–Cys-821, Cys-816–Cys-830, Cys-832–Cys-845, Cys-853–Cys-875, Cys-862–Cys-887, Cys-876–Cys-890, Cys-896–Cys-908, Cys-914–Cys-926, Cys-921–Cys-935, and Cys-937–Cys-950. The 42-residue stretch at 765–806 folds into the EGF-like 12; calcium-binding domain; sequence DINECVLNSLLCDNGQCRNTPGSFVCTCPKGFIYKPELKTCE. Residues 807–846 form the EGF-like 13; calcium-binding domain; that stretch reads DIDECESSPCINGVCKNSPGSFICECSSESTLDPTKTICI. One can recognise a TB 4 domain in the interval 851–902; that stretch reads GTCWQTVIDGRCEININGATLKSQCCSSLGAAWGSPCTPCQVDPICGKGYSR. The interval 862 to 887 is hybrid domain 2; that stretch reads CEININGATLKSQCCSSLGAAWGSPC. Positions 910–951 constitute an EGF-like 14; calcium-binding domain; sequence DIDECEVFPGVCKNGLCVNSKGSFKCQCPSGMTLDATGRICL. Positions 956 to 1008 constitute a TB 5 domain; sequence ETCFLRYEDEECTLPVAGRHRMDACCCSVGAAWGTEECEECPVRNTPEYEELC. An EGF-like 15; calcium-binding domain is found at 1028–1069; sequence DINECKMIPNLCTHGKCRNTIGSFKCRCDSGFALDSEERNCT. 46 disulfide bridges follow: Cys-1032–Cys-1044, Cys-1039–Cys-1053, Cys-1055–Cys-1068, Cys-1074–Cys-1086, Cys-1081–Cys-1095, Cys-1097–Cys-1111, Cys-1117–Cys-1129, Cys-1124–Cys-1138, Cys-1140–Cys-1153, Cys-1159–Cys-1171, Cys-1166–Cys-1180, Cys-1182–Cys-1195, Cys-1201–Cys-1212, Cys-1208–Cys-1221, Cys-1223–Cys-1236, Cys-1242–Cys-1254, Cys-1249–Cys-1263, Cys-1265–Cys-1278, Cys-1284–Cys-1296, Cys-1291–Cys-1305, Cys-1307–Cys-1320, Cys-1326–Cys-1339, Cys-1333–Cys-1348, Cys-1350–Cys-1361, Cys-1367–Cys-1380, Cys-1374–Cys-1389, Cys-1391–Cys-1402, Cys-1408–Cys-1420, Cys-1415–Cys-1429, Cys-1431–Cys-1444, Cys-1450–Cys-1461, Cys-1456–Cys-1470, Cys-1472–Cys-1485, Cys-1491–Cys-1502, Cys-1497–Cys-1511, Cys-1513–Cys-1526, Cys-1534–Cys-1562, Cys-1549–Cys-1574, Cys-1563–Cys-1577, Cys-1564–Cys-1589, Cys-1610–Cys-1622, Cys-1617–Cys-1631, Cys-1633–Cys-1646, Cys-1652–Cys-1663, Cys-1658–Cys-1672, and Cys-1674–Cys-1687. Asn-1067 carries N-linked (GlcNAc...) asparagine glycosylation. The EGF-like 16; calcium-binding domain occupies 1070 to 1112; that stretch reads DIDECRISPDLCGRGQCVNTPGDFECKCDEGYESGFMMMKNCM. The EGF-like 17; calcium-binding domain occupies 1113-1154; that stretch reads DIDECQRDPLLCRGGVCLNTEGSYRCECPPGHQLAPNISACI. Residue Ser-1135 is glycosylated (O-linked (Glc) serine). N-linked (GlcNAc...) asparagine glycosylation is present at Asn-1149. The EGF-like 18; calcium-binding domain maps to 1155 to 1196; sequence DINECELSAHLCPHGRCVNLIGKYQCACNPGYHSTPDRLFCV. The region spanning 1197-1237 is the EGF-like 19; calcium-binding domain; the sequence is DIDECSIMNGGCETFCTNSEGSYECSCQPGFALMPDQRSCT. O-linked (Glc) serine glycosylation occurs at Ser-1218. Positions 1238 to 1279 constitute an EGF-like 20; calcium-binding domain; it reads DIDECEDNPNICDGGQCTNIPGEYRCLCYDGFMASEDMKTCV. Positions 1280-1321 constitute an EGF-like 21; calcium-binding domain; it reads DVNECDLNPNICLSGTCENTKGSFICHCDMGYSGKKGKTGCT. Residue Ser-1302 is glycosylated (O-linked (Glc) serine). Residues 1322–1362 form the EGF-like 22; calcium-binding domain; it reads DINECEIGAHNCDRHAVCTNTAGSFKCSCSPGWIGDGIKCT. O-linked (Glc) serine glycosylation occurs at Ser-1345. The EGF-like 23; calcium-binding domain occupies 1363–1403; the sequence is DLDECSNGTHMCSQHADCKNTMGSYRCLCKEGYTGDGFTCT. Asn-1369 is a glycosylation site (N-linked (GlcNAc...) asparagine). The O-linked (Glc) serine glycan is linked to Ser-1386. The region spanning 1404–1445 is the EGF-like 24; calcium-binding domain; that stretch reads DLDECSENLNLCGNGQCLNAPGGYRCECDMGFVPSADGKACE. The 41-residue stretch at 1446–1486 folds into the EGF-like 25; calcium-binding domain; that stretch reads DIDECSLPNICVFGTCHNLPGLFRCECEIGYELDRSGGNCT. Asn-1484 carries an N-linked (GlcNAc...) asparagine glycan. One can recognise an EGF-like 26; calcium-binding domain in the interval 1487–1527; sequence DVNECLDPTTCISGNCVNTPGSYTCDCPPDFELNPTRVGCV. Ser-1508 carries an O-linked (Glc) serine glycan. The interval 1528 to 2731 is C-terminal domain; the sequence is DTRSGNCYLD…GYPKRGRKRR (1204 aa). The TB 6 domain occupies 1532–1589; sequence GNCYLDIRPRGDNGDTACSNEIGVGVSKASCCCSLGKAWGTPCELCPPVNTSEYKILC. Residues 1541–1543 carry the Cell attachment site motif; the sequence is RGD. Asn-1581 carries N-linked (GlcNAc...) asparagine glycosylation. Residues 1606 to 1647 form the EGF-like 27; calcium-binding domain; the sequence is DIDECQELPGLCQGGKCINTFGSFQCRCPTGYYLNEDTRVCD. O-linked (Glc) serine glycosylation is present at Ser-1628. The EGF-like 28; calcium-binding domain maps to 1648–1688; the sequence is DVNECETPGICGPGTCYNTVGNYTCICPPDYMQVNGGNNCM. An N-linked (GlcNAc...) asparagine glycan is attached at Asn-1669. Residues 1693–1748 enclose the TB 7 domain; the sequence is SLCYRNYYADNQTCDGELLFNMTKKMCCCSYNIGRAWNKPCEQCPIPSTDEFATLC. Asn-1703 and Asn-1713 each carry an N-linked (GlcNAc...) asparagine glycan. The 42-residue stretch at 1766–1807 folds into the EGF-like 29; calcium-binding domain; the sequence is DIDECREIPGVCENGVCINMVGSFRCECPVGFFYNDKLLVCE. Cystine bridges form between Cys-1770-Cys-1782, Cys-1777-Cys-1791, Cys-1793-Cys-1806, Cys-1812-Cys-1824, Cys-1818-Cys-1833, Cys-1835-Cys-1847, Cys-1853-Cys-1865, Cys-1860-Cys-1874, Cys-1876-Cys-1889, Cys-1895-Cys-1905, Cys-1900-Cys-1914, Cys-1916-Cys-1928, Cys-1934-Cys-1947, Cys-1942-Cys-1956, Cys-1958-Cys-1971, Cys-1977-Cys-1989, Cys-1984-Cys-1998, Cys-2000-Cys-2011, Cys-2017-Cys-2029, Cys-2024-Cys-2038, Cys-2040-Cys-2053, Cys-2061-Cys-2083, Cys-2070-Cys-2096, Cys-2084-Cys-2099, Cys-2085-Cys-2111, Cys-2131-Cys-2142, Cys-2137-Cys-2151, Cys-2153-Cys-2164, Cys-2170-Cys-2181, Cys-2176-Cys-2190, Cys-2192-Cys-2204, Cys-2210-Cys-2221, Cys-2217-Cys-2230, Cys-2232-Cys-2245, Cys-2251-Cys-2265, Cys-2258-Cys-2274, Cys-2276-Cys-2289, Cys-2295-Cys-2307, Cys-2302-Cys-2316, and Cys-2318-Cys-2331. An EGF-like 30; calcium-binding domain is found at 1808 to 1848; that stretch reads DIDECQNGPVCQRNAECINTAGSYRCDCKPGYRFTSTGQCN. A glycan (O-linked (Glc) serine) is linked at Ser-1830. An EGF-like 31; calcium-binding domain is found at 1849–1890; the sequence is DRNECQEIPNICSHGQCIDTVGSFYCLCHTGFKTNADQTMCL. The O-linked (Glc) serine glycan is linked to Ser-1871. The EGF-like 32; calcium-binding domain occupies 1891–1929; the sequence is DINECERDACGNGTCRNTIGSFNCRCNHGFILSHNNDCI. Asn-1902 is a glycosylation site (N-linked (GlcNAc...) asparagine). An O-linked (Glc) serine glycan is attached at Ser-1911. Residues 1930–1972 form the EGF-like 33; calcium-binding domain; sequence DVDECATGNGNLCRNGQCINTVGSFQCQCNEGYEVAPDGRTCV. An O-linked (Glc) serine glycan is attached at Ser-1953. Residues 1973–2012 form the EGF-like 34; calcium-binding domain; sequence DINECLLDPRKCAPGTCQNLDGSYRCICPPGYSLQNDKCE. The region spanning 2013-2054 is the EGF-like 35; calcium-binding domain; the sequence is DIDECVEEPEICALGTCSNTEGSFKCLCPDGFSLSSTGRRCQ. An O-linked (Glc) serine glycan is attached at Ser-2035. The region spanning 2059–2111 is the TB 8 domain; it reads SYCYAKFEGGKCSSPKSRNHSKQECCCALKGEGWGDPCELCPTEPDEAFRQIC. N-linked (GlcNAc...) asparagine glycosylation occurs at Asn-2077. The region spanning 2127 to 2165 is the EGF-like 36; calcium-binding domain; it reads DMDECKEPDVCKHGQCINTDGSYRCECPFGYILQGNECV. O-linked (Glc) serine glycosylation occurs at Ser-2148. An EGF-like 37; calcium-binding domain is found at 2166–2205; that stretch reads DTDECSVGNPCGNGTCKNVIGGFECTCEEGFEPGPMMTCE. Asn-2178 carries N-linked (GlcNAc...) asparagine glycosylation. Positions 2206–2246 constitute an EGF-like 38; calcium-binding domain; that stretch reads DINECAQNPLLCAFRCVNTYGSYECKCPAGYVLREDRRMCK. Ser-2227 carries an O-linked (Glc) serine glycan. Positions 2247-2290 constitute an EGF-like 39; calcium-binding domain; sequence DEDECEEGKHDCAEKQMECKNLIGTYLCICGPGYQRRPDGEGCV. Residues 2291 to 2332 form the EGF-like 40; calcium-binding domain; that stretch reads DENECQTKPGICENGRCLNTRGSYTCECNDGFTASPNQDECL. A glycan (O-linked (Glc) serine) is linked at Ser-2313. The TB 9 domain maps to 2337 to 2390; sequence GYCFTEVLQNMCQIGSSNRNPVTKSECCCDGGRGWGPHCEICPFQGTVAFKKLC. The EGF-like 41; calcium-binding domain maps to 2402–2443; that stretch reads DIDECKVIHDVCRNGECVNDRGSYHCICKTGYTPDITGTACV. 21 cysteine pairs are disulfide-bonded: Cys-2406-Cys-2418, Cys-2413-Cys-2427, Cys-2429-Cys-2442, Cys-2448-Cys-2459, Cys-2455-Cys-2468, Cys-2470-Cys-2483, Cys-2489-Cys-2500, Cys-2496-Cys-2509, Cys-2511-Cys-2522, Cys-2528-Cys-2541, Cys-2535-Cys-2550, Cys-2552-Cys-2565, Cys-2571-Cys-2581, Cys-2577-Cys-2590, Cys-2592-Cys-2605, Cys-2611-Cys-2622, Cys-2617-Cys-2631, Cys-2633-Cys-2646, Cys-2652-Cys-2663, Cys-2659-Cys-2672, and Cys-2674-Cys-2686. In terms of domain architecture, EGF-like 42; calcium-binding spans 2444–2484; it reads DLNECNQAPKPCNFICKNTEGSYQCSCPKGYILQEDGRSCK. Ser-2465 is a glycosylation site (O-linked (Glc) serine). An EGF-like 43; calcium-binding domain is found at 2485-2523; that stretch reads DLDECATKQHNCQFLCVNTIGSFTCKCPPGFTQHHTACI. The EGF-like 44; calcium-binding domain occupies 2524-2566; the sequence is DNNECTSDINLCGSKGICQNTPGSFTCECQRGFSLDPSGASCE. O-linked (Glc) serine glycosylation is present at Ser-2547. Residues 2567 to 2606 enclose the EGF-like 45; calcium-binding domain; it reads DVDECEGNHRCQHGCQNIIGGYRCSCPQGYLQHYQWNQCV. In terms of domain architecture, EGF-like 46; calcium-binding spans 2607–2647; it reads DENECLSAHICGGASCHNTLGSYKCMCPAGFQYEQFSGGCQ. The O-linked (Glc) serine glycan is linked to Ser-2628. Residues 2648 to 2687 enclose the EGF-like 47; calcium-binding domain; the sequence is DINECGSAQAPCSYGCSNTEGGYLCACPPGYFRIGQGHCV. Phosphoserine is present on residues Ser-2702 and Ser-2709. Residues Asn-2734, Asn-2750, and Asn-2767 are each glycosylated (N-linked (GlcNAc...) asparagine).

Belongs to the fibrillin family. In terms of assembly, interacts with COL16A1. Interacts with integrin alpha-V/beta-3. Interacts with ADAMTS10; this interaction promotes microfibril assembly. Interacts with THSD4; this interaction promotes fibril formation. Interacts (via N-terminal domain) with FBLN2 and FBLN5. Interacts with ELN. Forms a ternary complex with ELN and FBLN2 or FBLN5 and a significant interaction with ELN seen only in the presence of FBLN2 or FBLN5. Interacts (via N-terminal domain) with LTBP2 (via C-terminal domain) in a Ca(+2)-dependent manner. Interacts (via N-terminal domain) with LTBP1 (via C-terminal domain). Interacts with integrins ITGA5:ITGB1, ITGAV:ITGB3 and ITGAV:ITGB6. Interacts (via N-terminal domain) with BMP2, BMP4, BMP7, BMP10 and GDF5. Interacts (via N-terminal domain) with MFAP2 and MFAP5. Interacts with ADAMTSL5. Interacts with MFAP4. Interacts (via N-terminal domain) with TNFSF11 in a Ca(+2)-dependent manner. Interacts (via N-terminal domain) with EFEMP2; this interaction inhibits EFEMP2 binding to LOX and ELN. Cleavage of N- and C-terminus by furin is required for incorporation into the extracellular matrix and assembly into microfibrils. The C-terminus, which corresponds to the Asprosin chain, was initially thought to constitute a propeptide. Fibrillin-1 and Asprosin chains are still linked together during the secretion from cells, but are subsequently separated by furin, an essential step for incorporation of Fibrillin-1 into the nascent microfibrils. In terms of processing, forms intermolecular disulfide bonds either with other fibrillin-1 molecules or with other components of the microfibrils. Post-translationally, O-glycosylated on serine residues by POGLUT2 and POGLUT3 which is necessary for efficient protein secretion.

The protein localises to the secreted. It is found in the extracellular space. It localises to the extracellular matrix. Its function is as follows. Structural component of the 10-12 nm diameter microfibrils of the extracellular matrix, which conveys both structural and regulatory properties to load-bearing connective tissues. Fibrillin-1-containing microfibrils provide long-term force bearing structural support. In tissues such as the lung, blood vessels and skin, microfibrils form the periphery of the elastic fiber, acting as a scaffold for the deposition of elastin. In addition, microfibrils can occur as elastin-independent networks in tissues such as the ciliary zonule, tendon, cornea and glomerulus where they provide tensile strength and have anchoring roles. Fibrillin-1 also plays a key role in tissue homeostasis through specific interactions with growth factors, such as the bone morphogenetic proteins (BMPs), growth and differentiation factors (GDFs) and latent transforming growth factor-beta-binding proteins (LTBPs), cell-surface integrins and other extracellular matrix protein and proteoglycan components. Regulates osteoblast maturation by controlling TGF-beta bioavailability and calibrating TGF-beta and BMP levels, respectively. Negatively regulates osteoclastogenesis by binding and sequestering an osteoclast differentiation and activation factor TNFSF11. This leads to disruption of TNFSF11-induced Ca(2+) signaling and impairment of TNFSF11-mediated nuclear translocation and activation of transcription factor NFATC1 which regulates genes important for osteoclast differentiation and function. Mediates cell adhesion via its binding to cell surface receptors integrins ITGAV:ITGB3 and ITGA5:ITGB1. Binds heparin and this interaction plays an important role in the assembly of microfibrils. Functionally, hormone that targets the liver to increase plasma glucose levels. Secreted by white adipose tissue and circulates in the plasma. Acts in response to fasting and promotes blood glucose elevation by binding to the surface of hepatocytes. Promotes hepatocyte glucose release by activating the protein kinase A activity in the liver, resulting in rapid glucose release into the circulation. In Bos taurus (Bovine), this protein is Fibrillin-1.